The following is a 510-amino-acid chain: Glutamyl-tRNA(Gln) amidotransferase subunit A (510 aa).

Residues Lys82 and Ser157 each act as charge relay system in the active site. Catalysis depends on Ser181, which acts as the Acyl-ester intermediate.

This sequence belongs to the amidase family. GatA subfamily. Heterotrimer of A, B and C subunits.

The enzyme catalyses L-glutamyl-tRNA(Gln) + L-glutamine + ATP + H2O = L-glutaminyl-tRNA(Gln) + L-glutamate + ADP + phosphate + H(+). Its function is as follows. Allows the formation of correctly charged Gln-tRNA(Gln) through the transamidation of misacylated Glu-tRNA(Gln) in organisms which lack glutaminyl-tRNA synthetase. The reaction takes place in the presence of glutamine and ATP through an activated gamma-phospho-Glu-tRNA(Gln). The chain is Glutamyl-tRNA(Gln) amidotransferase subunit A from Bordetella avium (strain 197N).